A 416-amino-acid polypeptide reads, in one-letter code: Adenylosuccinate synthetase (416 aa).

GTP is bound by residues 13 to 19 (GDEGKGK) and 41 to 43 (GHT). The active-site Proton acceptor is aspartate 14. Mg(2+) contacts are provided by aspartate 14 and glycine 41. IMP is bound by residues 14 to 17 (DEGK), 39 to 42 (NAGH), threonine 126, arginine 140, glutamine 220, threonine 235, and arginine 299. The Proton donor role is filled by histidine 42. A substrate-binding site is contributed by 295 to 301 (TTTGRKR). GTP contacts are provided by residues arginine 301, 327–329 (KLD), and 405–407 (STS).

It belongs to the adenylosuccinate synthetase family. Homodimer. Mg(2+) is required as a cofactor.

The protein resides in the cytoplasm. It catalyses the reaction IMP + L-aspartate + GTP = N(6)-(1,2-dicarboxyethyl)-AMP + GDP + phosphate + 2 H(+). The protein operates within purine metabolism; AMP biosynthesis via de novo pathway; AMP from IMP: step 1/2. In terms of biological role, plays an important role in the de novo pathway of purine nucleotide biosynthesis. Catalyzes the first committed step in the biosynthesis of AMP from IMP. The chain is Adenylosuccinate synthetase from Campylobacter fetus subsp. fetus (strain 82-40).